The primary structure comprises 553 residues: Arginine--tRNA ligase (553 aa).

Positions 130–140 match the 'HIGH' region motif; it reads ANPTGDLHIGH.

Belongs to the class-I aminoacyl-tRNA synthetase family. In terms of assembly, monomer.

It is found in the cytoplasm. The enzyme catalyses tRNA(Arg) + L-arginine + ATP = L-arginyl-tRNA(Arg) + AMP + diphosphate. The protein is Arginine--tRNA ligase of Staphylococcus aureus (strain MSSA476).